Here is a 311-residue protein sequence, read N- to C-terminus: Retinol dehydrogenase 8 (311 aa).

9-18 (LISGCSSGIG) is a binding site for NADP(+). 3 helical membrane-spanning segments follow: residues 86–106 (VLVN…SLAA), 137–157 (IVVI…VYAA), and 169–189 (LAIQ…GPVV). Substrate is bound at residue Ser142. The active-site Proton acceptor is Tyr155.

This sequence belongs to the short-chain dehydrogenases/reductases (SDR) family. As to expression, detected in photoreceptor outer segments in the retina (at protein level).

It is found in the membrane. The catalysed reaction is all-trans-retinol + NADP(+) = all-trans-retinal + NADPH + H(+). Retinol dehydrogenase with a clear preference for NADP. Converts all-trans-retinal to all-trans-retinol. May play a role in the regeneration of visual pigment at high light intensity. This chain is Retinol dehydrogenase 8 (RDH8), found in Homo sapiens (Human).